A 216-amino-acid chain; its full sequence is Somatotropin (216 aa).

The signal sequence occupies residues 1-26; it reads MATDSRTSWLLTVSLLCLLWPQEASA. A Zn(2+)-binding site is contributed by H45. An intrachain disulfide couples C78 to C189. S131 bears the Phosphoserine mark. A Zn(2+)-binding site is contributed by E198. C206 and C214 form a disulfide bridge.

This sequence belongs to the somatotropin/prolactin family.

The protein resides in the secreted. Its function is as follows. Plays an important role in growth control. Its major role in stimulating body growth is to stimulate the liver and other tissues to secrete IGF1. It stimulates both the differentiation and proliferation of myoblasts. It also stimulates amino acid uptake and protein synthesis in muscle and other tissues. The protein is Somatotropin (Gh1) of Mus musculus (Mouse).